We begin with the raw amino-acid sequence, 110 residues long: MRRYFIDDETPWEELGDGIKRKIITWSDDLMMVCVHFAKGAIGTPHKHDIHDQIAYVAAGSFEVVIEGEKRILKTGDAYMAVKNEMHGVVSLEEGSVLIDTFSPKRADFL.

Residues V35–E94 form the Cupin type-2 domain.

It participates in glycan metabolism; pectin degradation. May have a role in pathogenicity. The sequence is that of Pectin degradation protein KdgF (kdgF) from Dickeya dadantii (strain 3937) (Erwinia chrysanthemi (strain 3937)).